An 860-amino-acid chain; its full sequence is Eukaryotic translation initiation factor 3 subunit C (860 aa).

Residues 1–76 (MSRFFYGNDS…SEESEEEDVV (76 aa)) are disordered. The span at 10–51 (SDSDSSGSDEEELYSDEEVEQSEEESSEEDASSEEESSEDED) shows a compositional bias: acidic residues. The region spanning 599–773 (FHMHINLELL…DAIVFRKGVE (175 aa)) is the PCI domain. Residues 812-860 (RDQGAGARGGRGPRGGGQARGGPRLPGGQQRRPGGQQFGGGALGGAIKA) are disordered. Positions 817 to 831 (GARGGRGPRGGGQAR) are enriched in gly residues. Low complexity predominate over residues 832-846 (GGPRLPGGQQRRPGG). The span at 847-860 (QQFGGGALGGAIKA) shows a compositional bias: gly residues.

The protein belongs to the eIF-3 subunit C family. As to quaternary structure, component of the eukaryotic translation initiation factor 3 (eIF-3) complex.

It localises to the cytoplasm. Its function is as follows. Component of the eukaryotic translation initiation factor 3 (eIF-3) complex, which is involved in protein synthesis of a specialized repertoire of mRNAs and, together with other initiation factors, stimulates binding of mRNA and methionyl-tRNAi to the 40S ribosome. The eIF-3 complex specifically targets and initiates translation of a subset of mRNAs involved in cell proliferation. This is Eukaryotic translation initiation factor 3 subunit C (nip1) from Emericella nidulans (strain FGSC A4 / ATCC 38163 / CBS 112.46 / NRRL 194 / M139) (Aspergillus nidulans).